The chain runs to 134 residues: D-dopachrome decarboxylase-like protein (134 aa).

It belongs to the MIF family.

The protein localises to the cytoplasm. Functionally, may have lyase activity. The sequence is that of D-dopachrome decarboxylase-like protein (DDTL) from Homo sapiens (Human).